The chain runs to 188 residues: Acireductone dioxygenase (188 aa).

Residues histidine 97, histidine 99, glutamate 103, and histidine 141 each contribute to the Fe(2+) site. Ni(2+) is bound by residues histidine 97, histidine 99, glutamate 103, and histidine 141.

This sequence belongs to the acireductone dioxygenase (ARD) family. As to quaternary structure, monomer. Fe(2+) is required as a cofactor. Ni(2+) serves as cofactor.

The catalysed reaction is 1,2-dihydroxy-5-(methylsulfanyl)pent-1-en-3-one + O2 = 3-(methylsulfanyl)propanoate + CO + formate + 2 H(+). It catalyses the reaction 1,2-dihydroxy-5-(methylsulfanyl)pent-1-en-3-one + O2 = 4-methylsulfanyl-2-oxobutanoate + formate + 2 H(+). Its pathway is amino-acid biosynthesis; L-methionine biosynthesis via salvage pathway; L-methionine from S-methyl-5-thio-alpha-D-ribose 1-phosphate: step 5/6. Functionally, catalyzes 2 different reactions between oxygen and the acireductone 1,2-dihydroxy-3-keto-5-methylthiopentene (DHK-MTPene) depending upon the metal bound in the active site. Fe-containing acireductone dioxygenase (Fe-ARD) produces formate and 2-keto-4-methylthiobutyrate (KMTB), the alpha-ketoacid precursor of methionine in the methionine recycle pathway. Ni-containing acireductone dioxygenase (Ni-ARD) produces methylthiopropionate, carbon monoxide and formate, and does not lie on the methionine recycle pathway. The protein is Acireductone dioxygenase of Xylella fastidiosa (strain M23).